The primary structure comprises 851 residues: DNA mismatch repair protein MutS (851 aa).

602 to 609 contacts ATP; it reads GPNMSGKS.

Belongs to the DNA mismatch repair MutS family.

Functionally, this protein is involved in the repair of mismatches in DNA. It is possible that it carries out the mismatch recognition step. This protein has a weak ATPase activity. This chain is DNA mismatch repair protein MutS, found in Streptococcus pyogenes serotype M12 (strain MGAS2096).